A 308-amino-acid polypeptide reads, in one-letter code: UPF0282 protein SSO3251 (308 aa).

The protein belongs to the UPF0282 family.

The protein is UPF0282 protein SSO3251 of Saccharolobus solfataricus (strain ATCC 35092 / DSM 1617 / JCM 11322 / P2) (Sulfolobus solfataricus).